Consider the following 698-residue polypeptide: Elongation factor G (698 aa).

Positions 6–281 (ENIRNIGICA…AVVDYLPSPI (276 aa)) constitute a tr-type G domain. GTP is bound by residues 15 to 22 (AHIDAGKT), 79 to 83 (DTPGH), and 133 to 136 (NKMD).

The protein belongs to the TRAFAC class translation factor GTPase superfamily. Classic translation factor GTPase family. EF-G/EF-2 subfamily.

The protein resides in the cytoplasm. Catalyzes the GTP-dependent ribosomal translocation step during translation elongation. During this step, the ribosome changes from the pre-translocational (PRE) to the post-translocational (POST) state as the newly formed A-site-bound peptidyl-tRNA and P-site-bound deacylated tRNA move to the P and E sites, respectively. Catalyzes the coordinated movement of the two tRNA molecules, the mRNA and conformational changes in the ribosome. In Rickettsia bellii (strain RML369-C), this protein is Elongation factor G.